We begin with the raw amino-acid sequence, 209 residues long: BAG family molecular chaperone regulator 1 (209 aa).

Residues 7-84 (CSSVQTIVDI…IIVMGGKNAM (78 aa)) enclose the Ubiquitin-like domain. The BAG domain occupies 107 to 193 (TYDVNLKDVA…TLLNQNDALL (87 aa)).

As to quaternary structure, homodimer or homotetramer.

Its function is as follows. May inhibit the chaperone activity of HSP70/HSC70 by promoting substrate release in an ATP-dependent manner. This Caenorhabditis briggsae protein is BAG family molecular chaperone regulator 1 (bag-1).